The following is a 333-amino-acid chain: NADH-quinone oxidoreductase subunit H (333 aa).

8 consecutive transmembrane segments (helical) span residues 15-35, 88-108, 117-137, 159-179, 191-211, 239-259, 274-296, and 313-333; these read FFIF…FVTY, FILA…VIPF, IGVG…GVVT, ISYE…AGSL, VWYI…AVAE, WAFF…LITV, IPGA…WFRV, and VLLP…ELFF.

The protein belongs to the complex I subunit 1 family. NDH-1 is composed of 14 different subunits. Subunits NuoA, H, J, K, L, M, N constitute the membrane sector of the complex.

The protein resides in the cell membrane. It carries out the reaction a quinone + NADH + 5 H(+)(in) = a quinol + NAD(+) + 4 H(+)(out). In terms of biological role, NDH-1 shuttles electrons from NADH, via FMN and iron-sulfur (Fe-S) centers, to quinones in the respiratory chain. The immediate electron acceptor for the enzyme in this species is believed to be ubiquinone. Couples the redox reaction to proton translocation (for every two electrons transferred, four hydrogen ions are translocated across the cytoplasmic membrane), and thus conserves the redox energy in a proton gradient. This subunit may bind ubiquinone. In Bacillus anthracis (strain A0248), this protein is NADH-quinone oxidoreductase subunit H.